The primary structure comprises 157 residues: Transcription elongation factor GreA (157 aa).

The interval M1–E24 is disordered. Residues H12–E24 are compositionally biased toward basic and acidic residues. Residues E53–E73 are a coiled coil.

Belongs to the GreA/GreB family.

Functionally, necessary for efficient RNA polymerase transcription elongation past template-encoded arresting sites. The arresting sites in DNA have the property of trapping a certain fraction of elongating RNA polymerases that pass through, resulting in locked ternary complexes. Cleavage of the nascent transcript by cleavage factors such as GreA or GreB allows the resumption of elongation from the new 3'terminus. GreA releases sequences of 2 to 3 nucleotides. The chain is Transcription elongation factor GreA from Beijerinckia indica subsp. indica (strain ATCC 9039 / DSM 1715 / NCIMB 8712).